A 530-amino-acid polypeptide reads, in one-letter code: Methionine--tRNA ligase (530 aa).

The short motif at 18-28 is the 'HIGH' region element; it reads YYVNDVPHIGS. The Zn(2+) site is built by Cys-133, Cys-136, Cys-151, and His-154. The 'KMSKS' region motif lies at 307-311; sequence KMGKS. Lys-310 is an ATP binding site.

This sequence belongs to the class-I aminoacyl-tRNA synthetase family. MetG type 2A subfamily. As to quaternary structure, monomer. The cofactor is Zn(2+).

The protein localises to the cytoplasm. The catalysed reaction is tRNA(Met) + L-methionine + ATP = L-methionyl-tRNA(Met) + AMP + diphosphate. Its function is as follows. Is required not only for elongation of protein synthesis but also for the initiation of all mRNA translation through initiator tRNA(fMet) aminoacylation. This chain is Methionine--tRNA ligase, found in Nostoc sp. (strain PCC 7120 / SAG 25.82 / UTEX 2576).